Reading from the N-terminus, the 520-residue chain is Erythritol kinase (520 aa).

Belongs to the FGGY kinase family.

It carries out the reaction erythritol + ATP = D-erythritol 1-phosphate + ADP + H(+). The protein operates within carbohydrate metabolism; erythritol degradation. Its function is as follows. Catalyzes the phosphorylation of erythritol to D-erythritol-1-phosphate. The polypeptide is Erythritol kinase (Brucella abortus (strain 2308)).